A 172-amino-acid polypeptide reads, in one-letter code: Phosphopantetheine adenylyltransferase (172 aa).

Thr14 provides a ligand contact to substrate. ATP contacts are provided by residues 14–15 (TF) and His22. Substrate contacts are provided by Lys46, Leu78, and Arg92. Residues 93–95 (GLR), Glu103, and 128–134 (WLYISST) each bind ATP.

The protein belongs to the bacterial CoaD family. As to quaternary structure, homohexamer. It depends on Mg(2+) as a cofactor.

It localises to the cytoplasm. The catalysed reaction is (R)-4'-phosphopantetheine + ATP + H(+) = 3'-dephospho-CoA + diphosphate. The protein operates within cofactor biosynthesis; coenzyme A biosynthesis; CoA from (R)-pantothenate: step 4/5. Reversibly transfers an adenylyl group from ATP to 4'-phosphopantetheine, yielding dephospho-CoA (dPCoA) and pyrophosphate. The chain is Phosphopantetheine adenylyltransferase from Lawsonia intracellularis (strain PHE/MN1-00).